Consider the following 129-residue polypeptide: Glycine cleavage system H protein (129 aa).

Positions 24-106 (IAVIGITAYA…YGDGWLIKVR (83 aa)) constitute a Lipoyl-binding domain. K65 bears the N6-lipoyllysine mark.

It belongs to the GcvH family. As to quaternary structure, the glycine cleavage system is composed of four proteins: P, T, L and H. (R)-lipoate serves as cofactor.

The glycine cleavage system catalyzes the degradation of glycine. The H protein shuttles the methylamine group of glycine from the P protein to the T protein. The polypeptide is Glycine cleavage system H protein (Synechococcus sp. (strain JA-2-3B'a(2-13)) (Cyanobacteria bacterium Yellowstone B-Prime)).